A 550-amino-acid chain; its full sequence is Hydroxylamine reductase (550 aa).

[2Fe-2S] cluster is bound by residues Cys3, Cys6, Cys18, and Cys25. The hybrid [4Fe-2O-2S] cluster site is built by His249, Glu273, Cys317, Cys405, Cys433, Cys458, Glu492, and Lys494. Position 405 is a cysteine persulfide (Cys405).

It belongs to the HCP family. [2Fe-2S] cluster is required as a cofactor. The cofactor is hybrid [4Fe-2O-2S] cluster.

The protein localises to the cytoplasm. It catalyses the reaction A + NH4(+) + H2O = hydroxylamine + AH2 + H(+). Catalyzes the reduction of hydroxylamine to form NH(3) and H(2)O. This chain is Hydroxylamine reductase, found in Shigella flexneri serotype 5b (strain 8401).